We begin with the raw amino-acid sequence, 224 residues long: Testis-expressed protein 30 (224 aa).

The chain is Testis-expressed protein 30 (TEX30) from Bos taurus (Bovine).